Consider the following 422-residue polypeptide: UDP-N-acetylglucosamine 1-carboxyvinyltransferase (422 aa).

22 to 23 (KN) provides a ligand contact to phosphoenolpyruvate. A UDP-N-acetyl-alpha-D-glucosamine-binding site is contributed by arginine 94. Catalysis depends on cysteine 118, which acts as the Proton donor. A 2-(S-cysteinyl)pyruvic acid O-phosphothioketal modification is found at cysteine 118. Residues 123 to 127 (RPVDL), aspartate 309, and isoleucine 331 contribute to the UDP-N-acetyl-alpha-D-glucosamine site.

This sequence belongs to the EPSP synthase family. MurA subfamily.

The protein resides in the cytoplasm. It catalyses the reaction phosphoenolpyruvate + UDP-N-acetyl-alpha-D-glucosamine = UDP-N-acetyl-3-O-(1-carboxyvinyl)-alpha-D-glucosamine + phosphate. It functions in the pathway cell wall biogenesis; peptidoglycan biosynthesis. Its function is as follows. Cell wall formation. Adds enolpyruvyl to UDP-N-acetylglucosamine. This chain is UDP-N-acetylglucosamine 1-carboxyvinyltransferase, found in Cereibacter sphaeroides (strain ATCC 17029 / ATH 2.4.9) (Rhodobacter sphaeroides).